A 296-amino-acid chain; its full sequence is Putative S-adenosyl-L-methionine-dependent methyltransferase MAP_3881 (296 aa).

Residues D121 and 150–151 each bind S-adenosyl-L-methionine; that span reads DL.

It belongs to the UPF0677 family.

Functionally, exhibits S-adenosyl-L-methionine-dependent methyltransferase activity. The protein is Putative S-adenosyl-L-methionine-dependent methyltransferase MAP_3881 of Mycolicibacterium paratuberculosis (strain ATCC BAA-968 / K-10) (Mycobacterium paratuberculosis).